The following is a 320-amino-acid chain: o-succinylbenzoate synthase (320 aa).

Lys-133 acts as the Proton donor in catalysis. Mg(2+)-binding residues include Asp-161, Glu-190, and Asp-213. The active-site Proton acceptor is Lys-235.

The protein belongs to the mandelate racemase/muconate lactonizing enzyme family. MenC type 1 subfamily. A divalent metal cation is required as a cofactor.

The catalysed reaction is (1R,6R)-6-hydroxy-2-succinyl-cyclohexa-2,4-diene-1-carboxylate = 2-succinylbenzoate + H2O. It functions in the pathway quinol/quinone metabolism; 1,4-dihydroxy-2-naphthoate biosynthesis; 1,4-dihydroxy-2-naphthoate from chorismate: step 4/7. It participates in quinol/quinone metabolism; menaquinone biosynthesis. In terms of biological role, converts 2-succinyl-6-hydroxy-2,4-cyclohexadiene-1-carboxylate (SHCHC) to 2-succinylbenzoate (OSB). This Escherichia coli O9:H4 (strain HS) protein is o-succinylbenzoate synthase.